Reading from the N-terminus, the 538-residue chain is NADH-quinone oxidoreductase subunit N (538 aa).

The next 14 membrane-spanning stretches (helical) occupy residues L28–V48, Q57–A77, P94–A114, H147–A167, L170–M190, F206–C226, I249–F269, M288–L308, W315–L335, L343–W363, V380–M400, I424–F444, G458–L478, and I503–P523.

It belongs to the complex I subunit 2 family. In terms of assembly, NDH-1 is composed of 14 different subunits. Subunits NuoA, H, J, K, L, M, N constitute the membrane sector of the complex.

Its subcellular location is the cell membrane. The enzyme catalyses a quinone + NADH + 5 H(+)(in) = a quinol + NAD(+) + 4 H(+)(out). NDH-1 shuttles electrons from NADH, via FMN and iron-sulfur (Fe-S) centers, to quinones in the respiratory chain. The immediate electron acceptor for the enzyme in this species is believed to be a menaquinone. Couples the redox reaction to proton translocation (for every two electrons transferred, four hydrogen ions are translocated across the cytoplasmic membrane), and thus conserves the redox energy in a proton gradient. This is NADH-quinone oxidoreductase subunit N from Cutibacterium acnes (strain DSM 16379 / KPA171202) (Propionibacterium acnes).